A 109-amino-acid chain; its full sequence is Membrane-bound lysozyme inhibitor of C-type lysozyme (109 aa).

An N-terminal signal peptide occupies residues 1–17; sequence MTMKKLLIIILPVLLSG. A lipid anchor (N-palmitoyl cysteine) is attached at Cys18. The S-diacylglycerol cysteine moiety is linked to residue Cys18. Residues Cys37 and Cys102 are joined by a disulfide bond.

This sequence belongs to the MliC family. Type 1 subfamily. As to quaternary structure, monomer.

It is found in the cell outer membrane. Functionally, specifically inhibits C-type lysozymes. This is Membrane-bound lysozyme inhibitor of C-type lysozyme from Escherichia coli (strain K12).